The chain runs to 209 residues: uncharacterized protein (209 aa).

The next 3 membrane-spanning stretches (helical) occupy residues 26–48, 147–169, and 179–196; these read LRYF…GLAV, AYLV…PFLM, and IVAA…VYLL.

The protein localises to the cell membrane. This is an uncharacterized protein from Archaeoglobus fulgidus (strain ATCC 49558 / DSM 4304 / JCM 9628 / NBRC 100126 / VC-16).